The sequence spans 875 residues: Valine--tRNA ligase (875 aa).

The short motif at 45 to 55 (PNVTGVLHMGH) is the 'HIGH' region element. Residues 524–528 (KMSKS) carry the 'KMSKS' region motif. Lys-527 is a binding site for ATP. Residues 803-837 (VKLLIDKTKELIRLEKQLEKYKMLKISVSKKLENE) adopt a coiled-coil conformation.

Belongs to the class-I aminoacyl-tRNA synthetase family. ValS type 1 subfamily. As to quaternary structure, monomer.

The protein resides in the cytoplasm. It catalyses the reaction tRNA(Val) + L-valine + ATP = L-valyl-tRNA(Val) + AMP + diphosphate. In terms of biological role, catalyzes the attachment of valine to tRNA(Val). As ValRS can inadvertently accommodate and process structurally similar amino acids such as threonine, to avoid such errors, it has a 'posttransfer' editing activity that hydrolyzes mischarged Thr-tRNA(Val) in a tRNA-dependent manner. This chain is Valine--tRNA ligase, found in Borrelia garinii subsp. bavariensis (strain ATCC BAA-2496 / DSM 23469 / PBi) (Borreliella bavariensis).